A 499-amino-acid chain; its full sequence is CD-NTase-associated protein 4 (499 aa).

The tract at residues 1 to 226 (MATSVLANWH…DFRFDGAARA (226 aa)) is N-terminal endonuclease domain. Residues Asp-49 and Gln-72 contribute to the active site. Asp-49 contacts Mg(2+). Mg(2+) is bound at residue Ile-73. Lys-74 is an active-site residue. The tract at residues 258–464 (FRNVALRSFS…HIFSAAPNAV (207 aa)) is C-terminal SAVED domain.

Belongs to the Cap4 nuclease family. As to quaternary structure, a monomer in the absence of ligand, in its presence it forms oligomers. Mg(2+) serves as cofactor.

Its activity is regulated as follows. DNase activity is activated upon ligand binding (cAAG). Inhibited by EDTA. Its function is as follows. Effector DNase of a CBASS antivirus system. CBASS (cyclic oligonucleotide-based antiphage signaling system) provides immunity against bacteriophages. The CD-NTase protein (CdnD) synthesizes cyclic nucleotides in response to infection; these serve as specific second messenger signals. The signals activate a diverse range of effectors, leading to bacterial cell death and thus abortive phage infection. A type II-C(AAG) CBASS system. In terms of biological role, binds second messenger 3',3',3'-cyclic AMP-AMP-GMP (cAAG). In the presence of cAAG (synthesized by the cognate CD-NTase protein in the CBASS operon), endonucleolytically degrades dsDNA to approximately 17 bp length fragments, with a preference for 5'-C|NG sites. Only binds DNA in the presence of cAAG. Not activated by c-di-AMP, c-di-GMP, 3',3'-cyclic GMP-AMP (cGAMP) or the second messenger of A.baumanii strain ATCC 27244. Functionally, protects E.coli against phage T2 infection. When the cdnD-cap2-cap3-cap4 operon is introduced in E.coli there is a more than 10(3) decrease in the efficiency of T2 plaque formation. The operon does not protect against phage T5 and only about 10-fold against T7. Expression of cdnD-cap4 alone protects E.coli against phage T2 infection. The protein is CD-NTase-associated protein 4 of Enterobacter hormaechei subsp. hoffmannii (strain UCI 50).